The primary structure comprises 172 residues: Orotate phosphoribosyltransferase (172 aa).

Residues Arg-88, Lys-89, Lys-92, His-94, and 113-121 (EDVTTSGGS) contribute to the 5-phospho-alpha-D-ribose 1-diphosphate site. Orotate-binding residues include Thr-117 and Arg-145.

Belongs to the purine/pyrimidine phosphoribosyltransferase family. PyrE subfamily. As to quaternary structure, homodimer. Requires Mg(2+) as cofactor.

It carries out the reaction orotidine 5'-phosphate + diphosphate = orotate + 5-phospho-alpha-D-ribose 1-diphosphate. It functions in the pathway pyrimidine metabolism; UMP biosynthesis via de novo pathway; UMP from orotate: step 1/2. Catalyzes the transfer of a ribosyl phosphate group from 5-phosphoribose 1-diphosphate to orotate, leading to the formation of orotidine monophosphate (OMP). The chain is Orotate phosphoribosyltransferase from Methanospirillum hungatei JF-1 (strain ATCC 27890 / DSM 864 / NBRC 100397 / JF-1).